Reading from the N-terminus, the 475-residue chain is Ribosomal protein uS12 methylthiotransferase RimO (475 aa).

The MTTase N-terminal domain maps to 5–114 (RTVRLIRLGC…IAQRLEDVLA (110 aa)). Residues C14, C49, C78, C174, C178, and C181 each coordinate [4Fe-4S] cluster. Residues 160 to 390 (LDDSPVAPLK…AGIAEEVTAD (231 aa)) enclose the Radical SAM core domain. Residues 393–461 (RARLGETVDV…GVDFLAAPVT (69 aa)) form the TRAM domain.

Belongs to the methylthiotransferase family. RimO subfamily. It depends on [4Fe-4S] cluster as a cofactor.

The protein resides in the cytoplasm. It carries out the reaction L-aspartate(89)-[ribosomal protein uS12]-hydrogen + (sulfur carrier)-SH + AH2 + 2 S-adenosyl-L-methionine = 3-methylsulfanyl-L-aspartate(89)-[ribosomal protein uS12]-hydrogen + (sulfur carrier)-H + 5'-deoxyadenosine + L-methionine + A + S-adenosyl-L-homocysteine + 2 H(+). Catalyzes the methylthiolation of an aspartic acid residue of ribosomal protein uS12. This Acidothermus cellulolyticus (strain ATCC 43068 / DSM 8971 / 11B) protein is Ribosomal protein uS12 methylthiotransferase RimO.